A 393-amino-acid polypeptide reads, in one-letter code: Bifunctional enzyme Fae/Hps (393 aa).

The interval M1–V161 is formaldehyde-activating enzyme. Catalysis depends on H17, which acts as the Proton donor. Substrate contacts are provided by D19, L48, K66, T68, and Q83. A 3-hexulose-6-phosphate synthase region spans residues M162–F393.

It in the N-terminal section; belongs to the formaldehyde-activating enzyme family. This sequence in the C-terminal section; belongs to the HPS/KGPDC family. HPS subfamily.

The catalysed reaction is 5,6,7,8-tetrahydromethanopterin + formaldehyde = 5,10-methylenetetrahydromethanopterin + H2O. It carries out the reaction D-ribulose 5-phosphate + formaldehyde = D-arabino-hex-3-ulose 6-phosphate. It functions in the pathway carbohydrate biosynthesis; D-ribose 5-phosphate biosynthesis. Catalyzes the condensation of formaldehyde with tetrahydromethanopterin (H(4)MPT) to 5,10-methylenetetrahydromethanopterin. In terms of biological role, catalyzes the reversible formation of ribulose-5-phosphate and formaldehyde from 3-hexulose-6-phosphate. The polypeptide is Bifunctional enzyme Fae/Hps (Methanospirillum hungatei JF-1 (strain ATCC 27890 / DSM 864 / NBRC 100397 / JF-1)).